The primary structure comprises 736 residues: Centrosomal protein kizuna (736 aa).

Residues 10–35 (HRAMKLQRNLRHCEGKRLELERELFQ) adopt a coiled-coil conformation. The span at 192–208 (NTSFQLSQKMPVTSVAS) shows a compositional bias: polar residues. 4 disordered regions span residues 192–238 (NTSF…SAQL), 279–305 (SFTH…DKHS), 323–348 (EDKQ…SYPP), and 642–690 (TVEE…NMST). Residues 210–219 (EDGRTHRAQI) show a composition bias toward basic and acidic residues. The span at 328-339 (LDSSSDLTVSIS) shows a compositional bias: polar residues. Residues 658-668 (SETSFSSSEKS) are compositionally biased toward low complexity. Positions 678–690 (IQPNYMKSNNMST) are enriched in polar residues.

Belongs to the kizuna family.

The protein resides in the cytoplasm. It localises to the cytoskeleton. Its subcellular location is the microtubule organizing center. The protein localises to the centrosome. It is found in the cilium basal body. Centrosomal protein required for establishing a robust mitotic centrosome architecture that can endure the forces that converge on the centrosomes during spindle formation. Required for stabilizing the expanded pericentriolar material around the centriole. The polypeptide is Centrosomal protein kizuna (kiz) (Xenopus laevis (African clawed frog)).